The primary structure comprises 221 residues: GFP-like non-fluorescent chromoprotein (221 aa).

Residues 62–64 constitute a cross-link (2-iminomethyl-5-imidazolinone (Gln-Gly)); it reads QYG. Tyrosine 63 is modified (2,3-didehydrotyrosine).

It belongs to the GFP family. In terms of assembly, homotetramer. Post-translationally, contains a chromophore consisting of modified amino acid residues. The chromophore is formed by autocatalytic backbone condensation between Xaa-N and Gly-(N+2), oxidation of Tyr-(N+1) to didehydrotyrosine, and formation of a double bond to the alpha-amino nitrogen of residue Xaa-N. Maturation of the chromophore requires nothing other than molecular oxygen. The precise stereochemistry of the tyrosine has not been determined.

Non-fluorescent pigment protein that is lilac in color. The polypeptide is GFP-like non-fluorescent chromoprotein (Goniopora tenuidens (Anemone coral)).